The following is a 239-amino-acid chain: Probable transcriptional regulatory protein BLi00754/BL02339 (239 aa).

Belongs to the TACO1 family. YeeN subfamily.

The protein resides in the cytoplasm. This Bacillus licheniformis (strain ATCC 14580 / DSM 13 / JCM 2505 / CCUG 7422 / NBRC 12200 / NCIMB 9375 / NCTC 10341 / NRRL NRS-1264 / Gibson 46) protein is Probable transcriptional regulatory protein BLi00754/BL02339.